We begin with the raw amino-acid sequence, 60 residues long: Large ribosomal subunit protein bL32 (60 aa).

This sequence belongs to the bacterial ribosomal protein bL32 family.

The polypeptide is Large ribosomal subunit protein bL32 (rpmF) (Thermotoga maritima (strain ATCC 43589 / DSM 3109 / JCM 10099 / NBRC 100826 / MSB8)).